Consider the following 310-residue polypeptide: Terpene synthase 6 (310 aa).

A DDxx(x)D/E motif motif is present at residues 93–98 (DDFYFE). Positions 222-230 (NDCYSFNKE) match the NDxxSxxxD/E motif motif.

It belongs to the terpene synthase family.

The catalysed reaction is (2E,6E)-farnesyl diphosphate = (E)-beta-farnesene + diphosphate. It catalyses the reaction (2E,6E)-farnesyl diphosphate = (1S,2S,4R)-beta-elemene + diphosphate. The enzyme catalyses (2E,6E)-farnesyl diphosphate = (3E,6E)-alpha-farnesene + diphosphate. Its function is as follows. Terpene synthase that converts its substrate farnesyl diphosphate (FPP) into the sesquiterpenes beta-elemene, (E)-beta-farnesene and (E,E)-alpha-farnesene. The polypeptide is Terpene synthase 6 (Dictyostelium purpureum (Slime mold)).